We begin with the raw amino-acid sequence, 2259 residues long: Protein Ycf2 (2259 aa).

1556–1563 (GSQETGRS) is an ATP binding site.

The protein belongs to the Ycf2 family.

The protein localises to the plastid. Its subcellular location is the chloroplast stroma. In terms of biological role, probable ATPase of unknown function. Its presence in a non-photosynthetic plant (Epifagus virginiana) and experiments in tobacco indicate that it has an essential function which is probably not related to photosynthesis. The chain is Protein Ycf2 from Physcomitrium patens (Spreading-leaved earth moss).